The primary structure comprises 896 residues: C-type lectin domain-containing protein 180 (896 aa).

The first 18 residues, 1 to 18, serve as a signal peptide directing secretion; sequence MRHLIFTGFVLTLTALEA. The region spanning 54–178 is the C-type lectin domain; it reads PWGDLYQFRA…CESTSPDHHA (125 aa). Asn133 carries an N-linked (GlcNAc...) asparagine glycan. A disulfide bridge connects residues Cys154 and Cys169. Residues Asn221 and Asn235 are each glycosylated (N-linked (GlcNAc...) asparagine). 4 disordered regions span residues 243-264, 354-436, 492-519, and 557-809; these read STVKFSDSEEETSSEEEESVSK, VKQE…LAPE, EKLENSKKSEEEKEELAKKDQMSTEEQK, and KVKA…TTKP. Residues 250 to 260 show a composition bias toward acidic residues; sequence SEEETSSEEEE. Composition is skewed to basic and acidic residues over residues 354 to 382 and 395 to 406; these read VKQEKTDEKKVEDKKETLANELNDNKISE and DMPKADIEPPKE. Acidic residues predominate over residues 407–426; that stretch reads EDCDEEGSGSGSGEEDEKDE. The span at 427–436 shows a compositional bias: basic and acidic residues; the sequence is SSEKIELAPE. Basic and acidic residues-rich tracts occupy residues 575 to 590, 607 to 663, and 683 to 692; these read KSAKEGKAEIKEKVGN, QNRE…ETKL, and EEPKSDKDSE. Positions 727 to 739 are enriched in low complexity; the sequence is STTTESTTVAVKE. Basic and acidic residues predominate over residues 740-768; it reads VPVDEIEKIAKLEAKQHTEDEKVTVETKQ. The segment covering 773 to 809 has biased composition (low complexity); that stretch reads TPAPTTSEKTSTTAAPSTKPAEETTTTTEAPSTTTKP.

The protein resides in the secreted. In Caenorhabditis elegans, this protein is C-type lectin domain-containing protein 180 (clec-180).